The following is a 153-amino-acid chain: SsrA-binding protein (153 aa).

This sequence belongs to the SmpB family.

Its subcellular location is the cytoplasm. In terms of biological role, required for rescue of stalled ribosomes mediated by trans-translation. Binds to transfer-messenger RNA (tmRNA), required for stable association of tmRNA with ribosomes. tmRNA and SmpB together mimic tRNA shape, replacing the anticodon stem-loop with SmpB. tmRNA is encoded by the ssrA gene; the 2 termini fold to resemble tRNA(Ala) and it encodes a 'tag peptide', a short internal open reading frame. During trans-translation Ala-aminoacylated tmRNA acts like a tRNA, entering the A-site of stalled ribosomes, displacing the stalled mRNA. The ribosome then switches to translate the ORF on the tmRNA; the nascent peptide is terminated with the 'tag peptide' encoded by the tmRNA and targeted for degradation. The ribosome is freed to recommence translation, which seems to be the essential function of trans-translation. The sequence is that of SsrA-binding protein from Cytophaga hutchinsonii (strain ATCC 33406 / DSM 1761 / CIP 103989 / NBRC 15051 / NCIMB 9469 / D465).